A 484-amino-acid polypeptide reads, in one-letter code: Toluene efflux pump outer membrane protein TtgC (484 aa).

A signal peptide spans 1–17; sequence MTKSLLSLAVTAFILGG. C18 is lipidated: N-palmitoyl cysteine. C18 carries S-diacylglycerol cysteine lipidation.

This sequence belongs to the outer membrane factor (OMF) (TC 1.B.17) family.

It is found in the cell outer membrane. The outer membrane component of a constitutive organic solvent efflux system. Is involved in export of toluene, styrene, m-xylene, propylbenzene and ethylbenzene. Also exports AMP and the antibiotics carbenicillin, nalidixic acid, chloramphenicol and tetracycline. This chain is Toluene efflux pump outer membrane protein TtgC (ttgC), found in Pseudomonas putida (strain DOT-T1E).